Reading from the N-terminus, the 358-residue chain is Methylthioribose-1-phosphate isomerase (358 aa).

Methionine 1 carries the post-translational modification N-acetylmethionine. The active-site Proton donor is the aspartate 248.

Belongs to the eIF-2B alpha/beta/delta subunits family. MtnA subfamily.

The protein resides in the cytoplasm. It localises to the nucleus. The enzyme catalyses 5-(methylsulfanyl)-alpha-D-ribose 1-phosphate = 5-(methylsulfanyl)-D-ribulose 1-phosphate. Its pathway is amino-acid biosynthesis; L-methionine biosynthesis via salvage pathway; L-methionine from S-methyl-5-thio-alpha-D-ribose 1-phosphate: step 1/6. Catalyzes the interconversion of methylthioribose-1-phosphate (MTR-1-P) into methylthioribulose-1-phosphate (MTRu-1-P). The sequence is that of Methylthioribose-1-phosphate isomerase from Bos taurus (Bovine).